The chain runs to 74 residues: Large ribosomal subunit protein bL31 (74 aa).

Positions 16, 18, 38, and 41 each coordinate Zn(2+).

Belongs to the bacterial ribosomal protein bL31 family. Type A subfamily. Part of the 50S ribosomal subunit. It depends on Zn(2+) as a cofactor.

Functionally, binds the 23S rRNA. The polypeptide is Large ribosomal subunit protein bL31 (Acinetobacter baylyi (strain ATCC 33305 / BD413 / ADP1)).